Reading from the N-terminus, the 323-residue chain is Elongation factor P--(R)-beta-lysine ligase (323 aa).

Substrate is bound at residue 74-76 (SPE). ATP-binding positions include 98–100 (RNE) and Asn-107. A substrate-binding site is contributed by Tyr-116. Residue 242 to 243 (EL) coordinates ATP. Glu-249 provides a ligand contact to substrate. Gly-298 is an ATP binding site.

The protein belongs to the class-II aminoacyl-tRNA synthetase family. EpmA subfamily. Homodimer.

It carries out the reaction D-beta-lysine + L-lysyl-[protein] + ATP = N(6)-((3R)-3,6-diaminohexanoyl)-L-lysyl-[protein] + AMP + diphosphate + H(+). Functionally, with EpmB is involved in the beta-lysylation step of the post-translational modification of translation elongation factor P (EF-P). Catalyzes the ATP-dependent activation of (R)-beta-lysine produced by EpmB, forming a lysyl-adenylate, from which the beta-lysyl moiety is then transferred to the epsilon-amino group of a conserved specific lysine residue in EF-P. This is Elongation factor P--(R)-beta-lysine ligase from Vibrio parahaemolyticus serotype O3:K6 (strain RIMD 2210633).